We begin with the raw amino-acid sequence, 193 residues long: Acyl-homoserine-lactone synthase (193 aa).

The protein belongs to the autoinducer synthase family.

The enzyme catalyses a fatty acyl-[ACP] + S-adenosyl-L-methionine = an N-acyl-L-homoserine lactone + S-methyl-5'-thioadenosine + holo-[ACP] + H(+). Functionally, required for the synthesis of OHHL (N-(3-oxohexanoyl)-L-homoserine lactone) also known as VAI or N-(beta-ketocaproyl)homoserine lactone or 3-oxo-N-(tetrahydro-2-oxo-3-furanyl)-hexanamide, an autoinducer molecule which binds to LuxR and thus acts in bioluminescence regulation. The polypeptide is Acyl-homoserine-lactone synthase (luxI) (Aliivibrio fischeri (strain ATCC 700601 / ES114) (Vibrio fischeri)).